The following is a 184-amino-acid chain: Large ribosomal subunit protein uL15 (184 aa).

Residues 1–62 form a disordered region; it reads MDLSSLRPAK…QMPMYRRLPK (62 aa). Gly residues predominate over residues 21-35; sequence RGPGSGNGTTAGKGN.

The protein belongs to the universal ribosomal protein uL15 family. Part of the 50S ribosomal subunit.

In terms of biological role, binds to the 23S rRNA. This is Large ribosomal subunit protein uL15 from Chlorobaculum parvum (strain DSM 263 / NCIMB 8327) (Chlorobium vibrioforme subsp. thiosulfatophilum).